We begin with the raw amino-acid sequence, 531 residues long: Peroxinectin A (531 aa).

The first 21 residues, 1–21, serve as a signal peptide directing secretion; sequence MRLNLISFFIIFTILVSISNS. A glycan (N-linked (GlcNAc...) asparagine) is linked at N62. H101 serves as the catalytic Proton acceptor. N131 and N338 each carry an N-linked (GlcNAc...) asparagine glycan.

Belongs to the peroxidase family.

It is found in the secreted. The enzyme catalyses 2 a phenolic donor + H2O2 = 2 a phenolic radical donor + 2 H2O. In Dictyostelium discoideum (Social amoeba), this protein is Peroxinectin A (poxA).